The primary structure comprises 185 residues: Large ribosomal subunit protein uL6m (185 aa).

It belongs to the universal ribosomal protein uL6 family.

The protein localises to the mitochondrion. This chain is Large ribosomal subunit protein uL6m (RPL6), found in Reclinomonas americana.